The following is a 132-amino-acid chain: Putative esterase Ta0293 (132 aa).

Belongs to the thioesterase PaaI family.

The polypeptide is Putative esterase Ta0293 (Thermoplasma acidophilum (strain ATCC 25905 / DSM 1728 / JCM 9062 / NBRC 15155 / AMRC-C165)).